The primary structure comprises 147 residues: MLEFLRKLIPWVLAGMLFGLGWHLGSDSMDAKWKQEVHNEYVKRVEATASTQRAINEISAKYQEDLAALEGSTDRIISDLRQDNKRLRVRVKPTGTSEGQCGFEPDDRAELDDRDAKRILSVTQKGDAWIRALQDTIRELQRKQEIK.

Residues 1 to 7 are Cytoplasmic-facing; the sequence is MLEFLRK. A helical; Signal-anchor for type II membrane protein transmembrane segment spans residues 8–24; sequence LIPWVLAGMLFGLGWHL. Residues 25–143 lie on the Periplasmic side of the membrane; it reads GSDSMDAKWK…QDTIRELQRK (119 aa).

It belongs to the T7likevirus i-spanin family. Interacts (via C-terminus) with the spanin outer lipoprotein subunit (o-spanin) (via C-terminus). Part of the spanin complex which spans the entire periplasmic space. The spanin complex is composed of spanin inner membrane subunit and spanin outer membrane subunit.

The protein localises to the host cell inner membrane. In terms of biological role, component of the spanin complex that disrupts the host outer membrane and participates in cell lysis during virus exit. The spanin complex conducts the final step in host lysis by disrupting the outer membrane after holin and endolysin action have permeabilized the inner membrane and degraded the host peptidoglycans. Host outer membrane disruption is possibly due to local fusion between the inner and outer membrane performed by the spanin complex. The polypeptide is Spanin, inner membrane subunit (18.5) (Escherichia coli (Bacteriophage T3)).